Reading from the N-terminus, the 60-residue chain is Large ribosomal subunit protein uL30 (60 aa).

The protein belongs to the universal ribosomal protein uL30 family. As to quaternary structure, part of the 50S ribosomal subunit.

This Streptococcus pneumoniae serotype 2 (strain D39 / NCTC 7466) protein is Large ribosomal subunit protein uL30.